Reading from the N-terminus, the 403-residue chain is MEKKINVFSEIGTLKTVLVHRPGDEIENLTPELLERLLFDDVPFKDVAVKEHDAFTKIMRDNGVEVLYIEKLAAETLDQHPDLREKFIDQFISEANIEDKYKEKYRDFISSLDNYRMIKKMIAGTKKLELGIDEGYKAYPFIADPLPNVLFQRDPFSSVGFGITMNRMWSVTRNRETIFPDLVFKHHNRFANQVPYYYERDWKEETIEGGDILVLNKETLIIGVTQRTTLKAIEKFSERLFNDPESSYSKVIALDLPKSRAFMHLDTVFTNIDYDKFIAHPLIFDCIDEFKIYEVSKQGTKEVKKTLIELLSDAAGREVQIIRCGGNDVVGASREQWNDGTNVVALRPGKVIAYERNWITIDLLRKAGVEVLTIASSELSRGRGGPRCMTMPLWREDLQEIKR.

The active-site Amidino-cysteine intermediate is cysteine 388.

It belongs to the arginine deiminase family.

Its subcellular location is the cytoplasm. It catalyses the reaction L-arginine + H2O = L-citrulline + NH4(+). It functions in the pathway amino-acid degradation; L-arginine degradation via ADI pathway; carbamoyl phosphate from L-arginine: step 1/2. This Mycoplasma capricolum subsp. capricolum (strain California kid / ATCC 27343 / NCTC 10154) protein is Arginine deiminase.